Reading from the N-terminus, the 507-residue chain is ATP synthase subunit alpha, chloroplastic (507 aa).

Residue Gly-170–Thr-177 coordinates ATP.

This sequence belongs to the ATPase alpha/beta chains family. In terms of assembly, F-type ATPases have 2 components, CF(1) - the catalytic core - and CF(0) - the membrane proton channel. CF(1) has five subunits: alpha(3), beta(3), gamma(1), delta(1), epsilon(1). CF(0) has four main subunits: a, b, b' and c.

Its subcellular location is the plastid. It is found in the chloroplast thylakoid membrane. The catalysed reaction is ATP + H2O + 4 H(+)(in) = ADP + phosphate + 5 H(+)(out). In terms of biological role, produces ATP from ADP in the presence of a proton gradient across the membrane. The alpha chain is a regulatory subunit. In Nicotiana tomentosiformis (Tobacco), this protein is ATP synthase subunit alpha, chloroplastic.